Reading from the N-terminus, the 104-residue chain is uncharacterized protein (104 aa).

2 helical membrane passes run 26–46 and 70–90; these read IGTG…FTFF and GLLG…IIAI.

It is found in the membrane. This is an uncharacterized protein from Acanthamoeba polyphaga mimivirus (APMV).